Consider the following 160-residue polypeptide: Eukaryotic translation initiation factor 5A-3 (160 aa).

Over residues 1-12 (MSDEEHHFESKA) the composition is skewed to basic and acidic residues. The disordered stretch occupies residues 1 to 21 (MSDEEHHFESKADAGASKTYP). Lys-52 carries the post-translational modification Hypusine.

Belongs to the eIF-5A family. Post-translationally, lys-52 undergoes hypusination, a unique post-translational modification that consists in the addition of a butylamino group from spermidine to lysine side chain, leading to the formation of the unusual amino acid hypusine. eIF-5As are the only known proteins to undergo this modification, which is essential for their function.

Translation factor that promotes translation elongation and termination, particularly upon ribosome stalling at specific amino acid sequence contexts. Binds between the exit (E) and peptidyl (P) site of the ribosome and promotes rescue of stalled ribosome: specifically required for efficient translation of polyproline-containing peptides as well as other motifs that stall the ribosome. Acts as a ribosome quality control (RQC) cofactor by joining the RQC complex to facilitate peptidyl transfer during CAT tailing step. This Solanum tuberosum (Potato) protein is Eukaryotic translation initiation factor 5A-3 (EIF5A3).